A 777-amino-acid chain; its full sequence is Double zinc ribbon and ankyrin repeat-containing protein 1 (777 aa).

Basic and acidic residues predominate over residues 161–176 (QVGERTDPKTLKDLRF). The tract at residues 161 to 202 (QVGERTDPKTLKDLRFSESPLEIPAHSGGSGSRPPTRQSQSP) is disordered. Positions 193 to 202 (RPPTRQSQSP) are enriched in polar residues. Ser-201 is subject to Phosphoserine. DZANK-type zinc fingers lie at residues 230-289 (CAHC…CVVC) and 358-406 (CSRC…GSCG). ANK repeat units lie at residues 442–473 (NIPL…LLAK) and 477–506 (EIAS…GYWR).

In terms of assembly, interacts with NINL. Associates with DYNC1H1 and multiple dynein intermediate and light chains as well as actin-binding proteins.

It is found in the cytoplasm. It localises to the cytoskeleton. The protein resides in the microtubule organizing center. The protein localises to the centrosome. Its subcellular location is the cilium basal body. Its function is as follows. Involved in vesicle transport in photoreceptor cells. The polypeptide is Double zinc ribbon and ankyrin repeat-containing protein 1 (DZANK1) (Macaca fascicularis (Crab-eating macaque)).